The sequence spans 336 residues: Glucokinase (336 aa).

12–17 provides a ligand contact to ATP; that stretch reads ADIGGT.

Belongs to the bacterial glucokinase family.

The protein localises to the cytoplasm. It catalyses the reaction D-glucose + ATP = D-glucose 6-phosphate + ADP + H(+). The chain is Glucokinase from Helicobacter pylori (strain J99 / ATCC 700824) (Campylobacter pylori J99).